Consider the following 318-residue polypeptide: NADH-ubiquinone oxidoreductase chain 1 (318 aa).

Helical transmembrane passes span 2–22, 68–88, 102–122, 146–166, 171–191, 217–237, 253–273, and 294–314; these read FLMN…FLTL, ISLF…MWIP, ILFI…SGWA, LAII…SSLI, FTWL…STLA, AGPF…MNAL, EMFT…FLWI, and LPLT…MACI.

The protein belongs to the complex I subunit 1 family.

The protein localises to the mitochondrion inner membrane. The enzyme catalyses a ubiquinone + NADH + 5 H(+)(in) = a ubiquinol + NAD(+) + 4 H(+)(out). In terms of biological role, core subunit of the mitochondrial membrane respiratory chain NADH dehydrogenase (Complex I) that is believed to belong to the minimal assembly required for catalysis. Complex I functions in the transfer of electrons from NADH to the respiratory chain. The immediate electron acceptor for the enzyme is believed to be ubiquinone. This Tamias sibiricus (Siberian chipmunk) protein is NADH-ubiquinone oxidoreductase chain 1 (MT-ND1).